Reading from the N-terminus, the 628-residue chain is Probable potassium transport system protein Kup (628 aa).

12 helical membrane passes run 15 to 35 (LAIAAIGVVFGDIGTSPLYSL), 55 to 75 (VISLLFWAIVIVVGVKYVLFV), 104 to 124 (AGLLMMLGIFGACMFYGDAVI), 142 to 162 (PHLSHLVLPLTIVILILLFWI), 173 to 193 (LFGPIMVLWFVVLAALGLWHI), 210 to 230 (TFMAAHVLQAYVVLGSVVLVL), 252 to 272 (WYVLVMPSLVLNYFGQGALLM), 281 to 301 (PFFLLAPDWALLPLVVLSTIA), 342 to 362 (IYVPVVNWMLLFIILCIVIAF), 372 to 392 (YGIAVTATMVITTILACVVMV), 400 to 420 (LLVALIIGVFMTVDLGFFGAN), and 426 to 446 (EGGWLPLGIGALLFFLLMTWY).

Belongs to the HAK/KUP transporter (TC 2.A.72) family.

The protein resides in the cell inner membrane. It catalyses the reaction K(+)(in) + H(+)(in) = K(+)(out) + H(+)(out). In terms of biological role, transport of potassium into the cell. Likely operates as a K(+):H(+) symporter. This is Probable potassium transport system protein Kup from Paraburkholderia xenovorans (strain LB400).